A 471-amino-acid polypeptide reads, in one-letter code: Cysteine--tRNA ligase (471 aa).

Cys30 contacts Zn(2+). The short motif at Pro32–Asn42 is the 'HIGH' region element. Zn(2+) contacts are provided by Cys212, His237, and Glu241. Positions Lys270–Ser274 match the 'KMSKS' region motif. An ATP-binding site is contributed by Lys273.

Belongs to the class-I aminoacyl-tRNA synthetase family. As to quaternary structure, monomer. Zn(2+) serves as cofactor.

It is found in the cytoplasm. It catalyses the reaction tRNA(Cys) + L-cysteine + ATP = L-cysteinyl-tRNA(Cys) + AMP + diphosphate. This is Cysteine--tRNA ligase from Leptospira interrogans serogroup Icterohaemorrhagiae serovar Lai (strain 56601).